Here is a 353-residue protein sequence, read N- to C-terminus: Protein MGF 360-13L (353 aa).

The protein belongs to the asfivirus MGF 360 family.

In terms of biological role, plays a role in virus cell tropism, and may be required for efficient virus replication in macrophages. The sequence is that of Protein MGF 360-13L from African swine fever virus (isolate Warthog/Namibia/Wart80/1980) (ASFV).